Consider the following 291-residue polypeptide: Gamma-soluble NSF attachment protein (291 aa).

This sequence belongs to the SNAP family.

It is found in the membrane. Its function is as follows. Required for vesicular transport between the endoplasmic reticulum and the Golgi apparatus. Binds to SNARE complex and then recruits NSF to disassemble it. In Arabidopsis thaliana (Mouse-ear cress), this protein is Gamma-soluble NSF attachment protein (GSNAP).